The chain runs to 379 residues: Anhydro-N-acetylmuramic acid kinase (379 aa).

9-16 is a binding site for ATP; the sequence is GTSADGVD.

Belongs to the anhydro-N-acetylmuramic acid kinase family.

The catalysed reaction is 1,6-anhydro-N-acetyl-beta-muramate + ATP + H2O = N-acetyl-D-muramate 6-phosphate + ADP + H(+). It functions in the pathway amino-sugar metabolism; 1,6-anhydro-N-acetylmuramate degradation. Its pathway is cell wall biogenesis; peptidoglycan recycling. Catalyzes the specific phosphorylation of 1,6-anhydro-N-acetylmuramic acid (anhMurNAc) with the simultaneous cleavage of the 1,6-anhydro ring, generating MurNAc-6-P. Is required for the utilization of anhMurNAc either imported from the medium or derived from its own cell wall murein, and thus plays a role in cell wall recycling. The polypeptide is Anhydro-N-acetylmuramic acid kinase (Prochlorococcus marinus (strain MIT 9313)).